The following is a 117-amino-acid chain: Fluoride-specific ion channel FluC 2 (117 aa).

A run of 2 helical transmembrane segments spans residues methionine 1 to isoleucine 21 and phenylalanine 46 to valine 66. 2 residues coordinate Na(+): glycine 71 and threonine 74. The chain crosses the membrane as a helical span at residues leucine 95–tyrosine 115.

The protein belongs to the fluoride channel Fluc/FEX (TC 1.A.43) family.

Its subcellular location is the cell membrane. It carries out the reaction fluoride(in) = fluoride(out). With respect to regulation, na(+) is not transported, but it plays an essential structural role and its presence is essential for fluoride channel function. Its function is as follows. Fluoride-specific ion channel. Important for reducing fluoride concentration in the cell, thus reducing its toxicity. The polypeptide is Fluoride-specific ion channel FluC 2 (Staphylococcus aureus (strain MRSA252)).